A 262-amino-acid chain; its full sequence is Lipoate-protein ligase A subunit 1 (262 aa).

The 197-residue stretch at 30–226 (YGDKPILRFY…GFSETLHIDF (197 aa)) folds into the BPL/LPL catalytic domain. ATP contacts are provided by Arg72, Gly77, Tyr80, Asp85, Pro132, and Lys135. Residues Thr137 and Asp138 each coordinate Mg(2+). Positions 145, 149, and 163 each coordinate ATP. Lys145 serves as a coordination point for (R)-lipoate. Residue Ala149 coordinates Mg(2+).

It belongs to the LplA family. In terms of assembly, heterodimer composed of LplA and LplB.

The protein localises to the cytoplasm. The catalysed reaction is L-lysyl-[lipoyl-carrier protein] + (R)-lipoate + ATP = N(6)-[(R)-lipoyl]-L-lysyl-[lipoyl-carrier protein] + AMP + diphosphate + H(+). Its pathway is protein modification; protein lipoylation via exogenous pathway; protein N(6)-(lipoyl)lysine from lipoate: step 1/2. It participates in protein modification; protein lipoylation via exogenous pathway; protein N(6)-(lipoyl)lysine from lipoate: step 2/2. Part of a lipoate-protein ligase complex that catalyzes both the ATP-dependent activation of exogenously supplied lipoate to lipoyl-AMP and the transfer of the activated lipoyl onto the lipoyl domains of lipoate-dependent enzymes. Can also use octanoate as substrate. In Thermoplasma acidophilum (strain ATCC 25905 / DSM 1728 / JCM 9062 / NBRC 15155 / AMRC-C165), this protein is Lipoate-protein ligase A subunit 1 (lplA).